The sequence spans 164 residues: Cell division protein SepF (164 aa).

The interval 29 to 57 is disordered; the sequence is INKGRGASQQEYDEYYEDSTPTVTQKEDP.

Belongs to the SepF family. Homodimer. Interacts with FtsZ.

The protein localises to the cytoplasm. Functionally, cell division protein that is part of the divisome complex and is recruited early to the Z-ring. Probably stimulates Z-ring formation, perhaps through the cross-linking of FtsZ protofilaments. Its function overlaps with FtsA. The sequence is that of Cell division protein SepF from Exiguobacterium sibiricum (strain DSM 17290 / CCUG 55495 / CIP 109462 / JCM 13490 / 255-15).